The sequence spans 399 residues: Chorismate synthase (399 aa).

Positions 40 and 46 each coordinate NADP(+). Residues 129-131 (RSS), 257-258 (QA), Gly302, 317-321 (KPISS), and Arg343 contribute to the FMN site.

This sequence belongs to the chorismate synthase family. In terms of assembly, homotetramer. FMNH2 serves as cofactor.

The enzyme catalyses 5-O-(1-carboxyvinyl)-3-phosphoshikimate = chorismate + phosphate. It participates in metabolic intermediate biosynthesis; chorismate biosynthesis; chorismate from D-erythrose 4-phosphate and phosphoenolpyruvate: step 7/7. In terms of biological role, catalyzes the anti-1,4-elimination of the C-3 phosphate and the C-6 proR hydrogen from 5-enolpyruvylshikimate-3-phosphate (EPSP) to yield chorismate, which is the branch point compound that serves as the starting substrate for the three terminal pathways of aromatic amino acid biosynthesis. This reaction introduces a second double bond into the aromatic ring system. The protein is Chorismate synthase of Chlorobium chlorochromatii (strain CaD3).